A 119-amino-acid polypeptide reads, in one-letter code: Large ribosomal subunit protein bL20 (119 aa).

Belongs to the bacterial ribosomal protein bL20 family.

Binds directly to 23S ribosomal RNA and is necessary for the in vitro assembly process of the 50S ribosomal subunit. It is not involved in the protein synthesizing functions of that subunit. This chain is Large ribosomal subunit protein bL20, found in Rhodopseudomonas palustris (strain BisB5).